A 127-amino-acid polypeptide reads, in one-letter code: uncharacterized protein (127 aa).

The next 3 helical transmembrane spans lie at 20–42 (NMIWLYEVYMLYKTYTSYFFMSS), 54–76 (IYFCYCANFIALFRVIFGTIFVY), and 91–110 (WILIYLKGSINSLLYMASFT).

The protein resides in the membrane. Its subcellular location is the cytoplasm. This is an uncharacterized protein from Schizosaccharomyces pombe (strain 972 / ATCC 24843) (Fission yeast).